We begin with the raw amino-acid sequence, 142 residues long: Large ribosomal subunit protein uL13 (142 aa).

Belongs to the universal ribosomal protein uL13 family. As to quaternary structure, part of the 50S ribosomal subunit.

Functionally, this protein is one of the early assembly proteins of the 50S ribosomal subunit, although it is not seen to bind rRNA by itself. It is important during the early stages of 50S assembly. The sequence is that of Large ribosomal subunit protein uL13 from Treponema denticola (strain ATCC 35405 / DSM 14222 / CIP 103919 / JCM 8153 / KCTC 15104).